Reading from the N-terminus, the 271-residue chain is Formamidopyrimidine-DNA glycosylase (271 aa).

The active-site Schiff-base intermediate with DNA is the P2. E3 serves as the catalytic Proton donor. Residue K56 is the Proton donor; for beta-elimination activity of the active site. DNA-binding residues include H89, R107, and K151. The FPG-type zinc-finger motif lies at 236–270 (NVYGRAGLQCRQCGTPVRLSRQGQRSTYFCPHCQR). R260 acts as the Proton donor; for delta-elimination activity in catalysis.

Belongs to the FPG family. In terms of assembly, monomer. Zn(2+) is required as a cofactor.

It catalyses the reaction Hydrolysis of DNA containing ring-opened 7-methylguanine residues, releasing 2,6-diamino-4-hydroxy-5-(N-methyl)formamidopyrimidine.. The catalysed reaction is 2'-deoxyribonucleotide-(2'-deoxyribose 5'-phosphate)-2'-deoxyribonucleotide-DNA = a 3'-end 2'-deoxyribonucleotide-(2,3-dehydro-2,3-deoxyribose 5'-phosphate)-DNA + a 5'-end 5'-phospho-2'-deoxyribonucleoside-DNA + H(+). Functionally, involved in base excision repair of DNA damaged by oxidation or by mutagenic agents. Acts as a DNA glycosylase that recognizes and removes damaged bases. Has a preference for oxidized purines, such as 7,8-dihydro-8-oxoguanine (8-oxoG). Has AP (apurinic/apyrimidinic) lyase activity and introduces nicks in the DNA strand. Cleaves the DNA backbone by beta-delta elimination to generate a single-strand break at the site of the removed base with both 3'- and 5'-phosphates. The chain is Formamidopyrimidine-DNA glycosylase from Acidovorax ebreus (strain TPSY) (Diaphorobacter sp. (strain TPSY)).